A 100-amino-acid polypeptide reads, in one-letter code: Aspartyl/glutamyl-tRNA(Asn/Gln) amidotransferase subunit C (100 aa).

The protein belongs to the GatC family. As to quaternary structure, heterotrimer of A, B and C subunits.

The enzyme catalyses L-glutamyl-tRNA(Gln) + L-glutamine + ATP + H2O = L-glutaminyl-tRNA(Gln) + L-glutamate + ADP + phosphate + H(+). The catalysed reaction is L-aspartyl-tRNA(Asn) + L-glutamine + ATP + H2O = L-asparaginyl-tRNA(Asn) + L-glutamate + ADP + phosphate + 2 H(+). Allows the formation of correctly charged Asn-tRNA(Asn) or Gln-tRNA(Gln) through the transamidation of misacylated Asp-tRNA(Asn) or Glu-tRNA(Gln) in organisms which lack either or both of asparaginyl-tRNA or glutaminyl-tRNA synthetases. The reaction takes place in the presence of glutamine and ATP through an activated phospho-Asp-tRNA(Asn) or phospho-Glu-tRNA(Gln). The protein is Aspartyl/glutamyl-tRNA(Asn/Gln) amidotransferase subunit C of Herminiimonas arsenicoxydans.